The primary structure comprises 655 residues: uncharacterized protein (655 aa).

A helical transmembrane segment spans residues 5–25; the sequence is IIIIIFIVINFINIIISSITF. 2 disordered regions span residues 337–363 and 484–525; these read NSDY…NNNN and DKIG…SDNS. The span at 515–524 shows a compositional bias: low complexity; the sequence is DNNSIGSSDN. Residues 588-608 form a helical membrane-spanning segment; the sequence is ILAVTISAIGIICVALLLTVV.

The protein localises to the membrane. This is an uncharacterized protein from Dictyostelium discoideum (Social amoeba).